The following is a 519-amino-acid chain: Cytochrome P450 52-E3 (519 aa).

A helical transmembrane segment spans residues 10-30; the sequence is VLGGISVSFLLAYQAIYFYFI. A heme-binding site is contributed by C461.

It belongs to the cytochrome P450 family. Heme serves as cofactor.

It localises to the membrane. The catalysed reaction is an omega-methyl-long-chain fatty acid + reduced [NADPH--hemoprotein reductase] + O2 = an omega-hydroxy-long-chain fatty acid + oxidized [NADPH--hemoprotein reductase] + H2O + H(+). The enzyme catalyses (9Z)-octadecenoate + reduced [NADPH--hemoprotein reductase] + O2 = 18-hydroxy-(9Z)-octadecenoate + oxidized [NADPH--hemoprotein reductase] + H2O + H(+). It carries out the reaction hexadecanoate + reduced [NADPH--hemoprotein reductase] + O2 = 16-hydroxyhexadecanoate + oxidized [NADPH--hemoprotein reductase] + H2O + H(+). It catalyses the reaction (9Z)-hexadecenoate + reduced [NADPH--hemoprotein reductase] + O2 = (9Z)-16-hydroxyhexadec-9-enoate + oxidized [NADPH--hemoprotein reductase] + H2O + H(+). In terms of biological role, catalyzes the terminal (at the omega-position) hydroxylation of a fatty acid. Probably involved in alkane metabolism. Has minor activity toward myristic acid, palmitic acid, palmitoleic acid and oleic acid. This chain is Cytochrome P450 52-E3, found in Starmerella bombicola (Yeast).